The chain runs to 271 residues: Phosphoglycerate mutase-like protein (271 aa).

Histidine 22 serves as the catalytic Tele-phosphohistidine intermediate. Glutamate 134 serves as the catalytic Proton donor/acceptor. The disordered stretch occupies residues 252–271 (SAETTNYPGKVPEGLDNPSG).

The protein belongs to the phosphoglycerate mutase family. Expressed in the shoot apical meristem and meristematic zone of the root tips.

In terms of biological role, may play a role in carbohydrates metabolism. In Arabidopsis thaliana (Mouse-ear cress), this protein is Phosphoglycerate mutase-like protein.